Here is a 167-residue protein sequence, read N- to C-terminus: Large ribosomal subunit protein uL10 (167 aa).

It belongs to the universal ribosomal protein uL10 family. In terms of assembly, part of the ribosomal stalk of the 50S ribosomal subunit. The N-terminus interacts with L11 and the large rRNA to form the base of the stalk. The C-terminus forms an elongated spine to which L12 dimers bind in a sequential fashion forming a multimeric L10(L12)X complex.

In terms of biological role, forms part of the ribosomal stalk, playing a central role in the interaction of the ribosome with GTP-bound translation factors. The protein is Large ribosomal subunit protein uL10 of Streptococcus thermophilus (strain CNRZ 1066).